The primary structure comprises 93 residues: Transcription factor PRE3 (93 aa).

Positions 6–61 constitute a bHLH domain; that stretch reads SRSRQSSGTSRISEDQINDLIIKLQQLLPELRDSRRSDKVSAARVLQDTCNYIRNL.

In terms of assembly, homodimer. Interacts with BHLH 147, BHLH148, BHLH149, BHLH150 and IBH1. Interacts with SIEL. As to expression, expressed in root and shoot meristems, and young siliques. Low levels detected in all aerial tissues.

Its subcellular location is the nucleus. It is found in the cytoplasm. Its function is as follows. Atypical and probable non DNA-binding bHLH transcription factor required for MONOPTEROS-dependent root initiation in embryo. Promotes the correct definition of the hypophysis cell division plane. Transcriptionally controlled by MONOPTEROS. Moves from its site of synthesis in pro-embryos cells into the hypophysis. Regulates brassinosteroid (BR) signaling by sequestering negative BR signaling components. May function as positive regulator of gibberellin signaling. May play a role in the regulation of light signaling and possibly auxin signaling. This is Transcription factor PRE3 (PRE3) from Arabidopsis thaliana (Mouse-ear cress).